Consider the following 473-residue polypeptide: Ribulose bisphosphate carboxylase large chain 1 (473 aa).

Positions 116 and 166 each coordinate substrate. Lys-168 functions as the Proton acceptor in the catalytic mechanism. Position 170 (Lys-170) interacts with substrate. Positions 194, 196, and 197 each coordinate Mg(2+). N6-carboxylysine is present on Lys-194. His-287 functions as the Proton acceptor in the catalytic mechanism. The substrate site is built by Arg-288, His-320, and Ser-372.

This sequence belongs to the RuBisCO large chain family. Type I subfamily. As to quaternary structure, heterohexadecamer of 8 large chains and 8 small chains. Mg(2+) is required as a cofactor.

The catalysed reaction is 2 (2R)-3-phosphoglycerate + 2 H(+) = D-ribulose 1,5-bisphosphate + CO2 + H2O. It carries out the reaction D-ribulose 1,5-bisphosphate + O2 = 2-phosphoglycolate + (2R)-3-phosphoglycerate + 2 H(+). Functionally, ruBisCO catalyzes two reactions: the carboxylation of D-ribulose 1,5-bisphosphate, the primary event in carbon dioxide fixation, as well as the oxidative fragmentation of the pentose substrate. Both reactions occur simultaneously and in competition at the same active site. In Nitrobacter winogradskyi (strain ATCC 25391 / DSM 10237 / CIP 104748 / NCIMB 11846 / Nb-255), this protein is Ribulose bisphosphate carboxylase large chain 1.